Consider the following 97-residue polypeptide: Small ribosomal subunit protein bS20 (97 aa).

It belongs to the bacterial ribosomal protein bS20 family.

Its function is as follows. Binds directly to 16S ribosomal RNA. In Prochlorococcus marinus (strain MIT 9515), this protein is Small ribosomal subunit protein bS20.